The sequence spans 65 residues: MSEIIEVIYEDGVLKPLKPLKIKGKKRLKIKIVNDDVEEFLKSMIIKKCKDIDYKKLKEAYYESF.

Belongs to the UPF0165 family.

Possibly the antitoxin component of a type II toxin-antitoxin (TA) system. The sequence is that of Putative antitoxin MJECL31 from Methanocaldococcus jannaschii (strain ATCC 43067 / DSM 2661 / JAL-1 / JCM 10045 / NBRC 100440) (Methanococcus jannaschii).